Reading from the N-terminus, the 362-residue chain is Outer envelope protein 39, chloroplastic (362 aa).

The protein belongs to the OEP80 (TC 1.B.33.2) family. Expressed in germinating seeds. Expressed in the vasculature of roots, cotyledons and leaves.

The protein resides in the plastid. It is found in the chloroplast outer membrane. Beta-barrel pore-forming protein which possesses voltage-dependent channel activity. Required for proper plastid development. Involved in the maintenance of metabolic homeostasis of full-grown plants. The sequence is that of Outer envelope protein 39, chloroplastic from Arabidopsis thaliana (Mouse-ear cress).